The chain runs to 121 residues: Large ribosomal subunit protein eL18 (121 aa).

It belongs to the eukaryotic ribosomal protein eL18 family. Part of the 50S ribosomal subunit.

The chain is Large ribosomal subunit protein eL18 from Thermococcus kodakarensis (strain ATCC BAA-918 / JCM 12380 / KOD1) (Pyrococcus kodakaraensis (strain KOD1)).